The sequence spans 188 residues: Elongation factor P (188 aa).

Lysine 34 bears the N6-(3,6-diaminohexanoyl)-5-hydroxylysine mark.

Belongs to the elongation factor P family. Post-translationally, may be beta-lysylated on the epsilon-amino group of Lys-34 by the combined action of EpmA and EpmB, and then hydroxylated on the C5 position of the same residue by EpmC (if this protein is present). Lysylation is critical for the stimulatory effect of EF-P on peptide-bond formation. The lysylation moiety may extend toward the peptidyltransferase center and stabilize the terminal 3-CCA end of the tRNA. Hydroxylation of the C5 position on Lys-34 may allow additional potential stabilizing hydrogen-bond interactions with the P-tRNA.

It is found in the cytoplasm. Its pathway is protein biosynthesis; polypeptide chain elongation. Involved in peptide bond synthesis. Alleviates ribosome stalling that occurs when 3 or more consecutive Pro residues or the sequence PPG is present in a protein, possibly by augmenting the peptidyl transferase activity of the ribosome. Modification of Lys-34 is required for alleviation. The sequence is that of Elongation factor P from Stenotrophomonas maltophilia (strain K279a).